Here is an 861-residue protein sequence, read N- to C-terminus: MQQQYNPSAIESKVQHFWEENKVFKAVKDITKEKYYCLSMLPYPSGRLHMGHVRNYTIGDVISRYQRMIGKNVLQPMGWDAFGLPAEGAAVKNNTAPAKWTYENIEYMKNQLKVLGFSYDWDREITTCRPEYYKWEQWFFTELYKKGLVYKKTSTVNWCPNDETVLANEQVHEGCCWRCDTPVEQRDIPQWFIKITDYAEELLTQLDNLTQWPDQVKTMQRNWIGRSEGVEITFKIAGSNATLPVYTTRPDTFFGVSYLAVAAAHPLAELASTNNPALAEFIREAKNTKVAEAELATMEKKGMPTGLFAIHPLTGKEIPVWVANFVLMHYGTGAVMAVPAHDERDFDFAKKYGLQINQVIQPLDASTWDFSQAAFTEHGKLINSAEFDGLDFNHAFNAIADKLESLGVGKRQVNFRLRDWGVSRQRYWGAPIPMMTTEQGEVVTVPLKDLPVILPENVVMDGVQSPIKSDPEWAKTTYEGQPALKETDTFDTFMESSWYYARYTCPQYHQGMLDADEANYWLPVDQYIGGIEHATMHLLYFRFFHKLLRDAGILTSDEPATKLLCQGMVLADAFYYTSPTNERIWVSPTQVSLERDEKGRIINATDPAGHKLVHSGMTKMSKSKNNGIDPQEMVEKYGADTVRLFMMFASPAEMTLEWQESGVEGAKRFLGRVWNLVYEYVQQPATQALNALELNKAQKELRRDVHKTIAKVSDDIGRRQTFNTAIAAIMELMNKLNKAPLESDQDKAVMAEALSAVVRMLYPITPHICFELWQALGNQQTIDFAPWVVSDETAMIEDEKLVVVQVNGKVRGKITVPANASEDEVKITAKNDANVAKFLADMQIVKEIYIPFKMLNFVVKV.

The short motif at 42–52 is the 'HIGH' region element; it reads PYPSGRLHMGH. Positions 619-623 match the 'KMSKS' region motif; the sequence is KMSKS. Lysine 622 lines the ATP pocket.

Belongs to the class-I aminoacyl-tRNA synthetase family.

The protein localises to the cytoplasm. The enzyme catalyses tRNA(Leu) + L-leucine + ATP = L-leucyl-tRNA(Leu) + AMP + diphosphate. The sequence is that of Leucine--tRNA ligase from Haemophilus ducreyi (strain 35000HP / ATCC 700724).